The chain runs to 318 residues: Tyrosine--tRNA ligase (318 aa).

Tyrosine 35 is an L-tyrosine binding site. A 'HIGH' region motif is present at residues 40–48 (PSGKVHLGH). L-tyrosine contacts are provided by tyrosine 154, glutamine 158, aspartate 161, and glutamine 176. Residues 211-215 (KMSSS) carry the 'KMSKS' region motif. Serine 214 is a binding site for ATP.

The protein belongs to the class-I aminoacyl-tRNA synthetase family. TyrS type 3 subfamily. As to quaternary structure, homodimer.

Its subcellular location is the cytoplasm. It catalyses the reaction tRNA(Tyr) + L-tyrosine + ATP = L-tyrosyl-tRNA(Tyr) + AMP + diphosphate + H(+). Catalyzes the attachment of tyrosine to tRNA(Tyr) in a two-step reaction: tyrosine is first activated by ATP to form Tyr-AMP and then transferred to the acceptor end of tRNA(Tyr). The polypeptide is Tyrosine--tRNA ligase (Methanosphaera stadtmanae (strain ATCC 43021 / DSM 3091 / JCM 11832 / MCB-3)).